Reading from the N-terminus, the 136-residue chain is Putative zinc finger protein 818 (136 aa).

Residues 64–83 (NVCGKVLSQNSHLVNHQRIH) form a C2H2-type 1; degenerate zinc finger. The C2H2-type 2 zinc finger occupies 89 to 111 (YRCHECGKAFTQGSRFINHQIVH).

This sequence belongs to the krueppel C2H2-type zinc-finger protein family.

It localises to the nucleus. Functionally, may be involved in transcriptional regulation. The chain is Putative zinc finger protein 818 (ZNF818P) from Homo sapiens (Human).